The following is an 84-amino-acid chain: uncharacterized protein (84 aa).

The stretch at 5–31 (KIQEIINELDNLMNRERKYIELVATVE) forms a coiled coil.

This is an uncharacterized protein from Methanocaldococcus jannaschii (strain ATCC 43067 / DSM 2661 / JAL-1 / JCM 10045 / NBRC 100440) (Methanococcus jannaschii).